The sequence spans 106 residues: Somatoliberin (106 aa).

The N-terminal stretch at 1–19 (MLLWVFFLVTLTLSSGSHG) is a signal peptide. The propeptide occupies 20 to 30 (SLPSQPLRIPR). Leu74 carries the post-translational modification Leucine amide. Residues 77–106 (QVDGVWTDQQQMALESTLVSLLQERRNSQG) constitute a propeptide that is removed on maturation.

It belongs to the glucagon family.

The protein localises to the secreted. In terms of biological role, GRF is released by the hypothalamus and acts on the adenohypophyse to stimulate the secretion of growth hormone. This chain is Somatoliberin (GHRH), found in Bos taurus (Bovine).